A 510-amino-acid chain; its full sequence is Putative glycerol-3-phosphate transporter 3 (510 aa).

The next 12 helical transmembrane spans lie at 31-51, 91-111, 123-143, 158-178, 185-205, 217-237, 279-299, 331-351, 355-375, 378-398, 436-456, and 459-479; these read LSFK…YIAF, ALLG…MFVA, FLTI…VAFW, LAGW…GNWF, VIMG…TLIA, FVGP…FLPV, VGFL…CLFF, GNLS…AGYF, LDGR…ALFL, IYGH…GLFV, TGSV…AISW, and VFYM…TLII.

Belongs to the major facilitator superfamily. Organophosphate:Pi antiporter (OPA) (TC 2.A.1.4) family.

It localises to the membrane. This chain is Putative glycerol-3-phosphate transporter 3, found in Arabidopsis thaliana (Mouse-ear cress).